The sequence spans 504 residues: L-amino-acid oxidase (504 aa).

Residues 1 to 18 (MNIFFMFSLLFLATLGSC) form the signal peptide. C28 and C191 are oxidised to a cystine. Residues 61–62 (MS), 81–82 (EA), R89, and 105–108 (GPMR) contribute to the FAD site. R108 provides a ligand contact to substrate. A glycan (N-linked (GlcNAc...) asparagine) is linked at N190. H241 contacts substrate. V279 contacts FAD. C349 and C430 form a disulfide bridge. An N-linked (GlcNAc...) asparagine glycan is attached at N379. Residue Y390 coordinates substrate. Residues E475 and 482-487 (GWIDST) each bind FAD. 482-483 (GW) is a substrate binding site.

Belongs to the flavin monoamine oxidase family. FIG1 subfamily. Homodimer; non-covalently linked. Requires FAD as cofactor. In terms of tissue distribution, expressed by the venom gland.

The protein resides in the secreted. The catalysed reaction is an L-alpha-amino acid + O2 + H2O = a 2-oxocarboxylate + H2O2 + NH4(+). Catalyzes an oxidative deamination of predominantly hydrophobic and aromatic L-amino acids, thus producing hydrogen peroxide that may contribute to the diverse toxic effects of this enzyme. Exhibits diverse biological activities, such as hemorrhage, hemolysis, edema, apoptosis of vascular endothelial cells or tumor cell lines, antibacterial and antiparasitic activities, as well as regulation of platelet aggregation. Its effect on platelets is controversial, since it either induces aggregation or inhibits agonist-induced aggregation. These different effects are probably due to different experimental conditions. This chain is L-amino-acid oxidase, found in Echis ocellatus (Ocellated saw-scaled viper).